A 293-amino-acid polypeptide reads, in one-letter code: Ribulose bisphosphate carboxylase/oxygenase activase, chloroplastic (293 aa).

Position 75-82 (75-82 (PGTGKTTV)) interacts with ATP.

Belongs to the CbxX/CfxQ family. Forms homooligomers. Forms heterohexameric rings with the nuclear-encoded Rca subunit consisting of 3 of each nuclear- and plastidial-encoded subunits that alternate in the ring.

It localises to the plastid. The protein localises to the chloroplast. Functionally, required for the expression of ribulose 1,5-bisphosphate carboxylase/oxygenase (RuBisCo). ATPase involved in the activation of red-type RuBisCo, which tends to form inactive complexes with its substrate ribulose 1,5-bisphosphate (RuBP). Catalyzes the release of RuBP from inhibited RuBisCo in an ATP-dependent manner. Activation of RuBisCO involves the ATP-dependent carboxylation of the epsilon-amino group of lysine leading to a carbamate structure. The nuclear-encoded subunit plays a more critical role in activase function than the plastidial-encoded subunit. This is Ribulose bisphosphate carboxylase/oxygenase activase, chloroplastic from Cyanidioschyzon merolae (strain NIES-3377 / 10D) (Unicellular red alga).